Reading from the N-terminus, the 214-residue chain is Phosphatidylserine decarboxylase proenzyme (214 aa).

The Schiff-base intermediate with substrate; via pyruvic acid role is filled by Ser182. Position 182 is a pyruvic acid (Ser); by autocatalysis (Ser182).

Belongs to the phosphatidylserine decarboxylase family. PSD-A subfamily. Heterodimer of a large membrane-associated beta subunit and a small pyruvoyl-containing alpha subunit. Pyruvate is required as a cofactor. Post-translationally, is synthesized initially as an inactive proenzyme. Formation of the active enzyme involves a self-maturation process in which the active site pyruvoyl group is generated from an internal serine residue via an autocatalytic post-translational modification. Two non-identical subunits are generated from the proenzyme in this reaction, and the pyruvate is formed at the N-terminus of the alpha chain, which is derived from the carboxyl end of the proenzyme. The post-translation cleavage follows an unusual pathway, termed non-hydrolytic serinolysis, in which the side chain hydroxyl group of the serine supplies its oxygen atom to form the C-terminus of the beta chain, while the remainder of the serine residue undergoes an oxidative deamination to produce ammonia and the pyruvoyl prosthetic group on the alpha chain.

Its subcellular location is the cell membrane. The catalysed reaction is a 1,2-diacyl-sn-glycero-3-phospho-L-serine + H(+) = a 1,2-diacyl-sn-glycero-3-phosphoethanolamine + CO2. The protein operates within phospholipid metabolism; phosphatidylethanolamine biosynthesis; phosphatidylethanolamine from CDP-diacylglycerol: step 2/2. Functionally, catalyzes the formation of phosphatidylethanolamine (PtdEtn) from phosphatidylserine (PtdSer). In Burkholderia cenocepacia (strain ATCC BAA-245 / DSM 16553 / LMG 16656 / NCTC 13227 / J2315 / CF5610) (Burkholderia cepacia (strain J2315)), this protein is Phosphatidylserine decarboxylase proenzyme.